Consider the following 549-residue polypeptide: Glucose-6-phosphate isomerase (549 aa).

E355 serves as the catalytic Proton donor. Active-site residues include H386 and K514.

It belongs to the GPI family.

The protein resides in the cytoplasm. The enzyme catalyses alpha-D-glucose 6-phosphate = beta-D-fructose 6-phosphate. It participates in carbohydrate biosynthesis; gluconeogenesis. The protein operates within carbohydrate degradation; glycolysis; D-glyceraldehyde 3-phosphate and glycerone phosphate from D-glucose: step 2/4. Functionally, catalyzes the reversible isomerization of glucose-6-phosphate to fructose-6-phosphate. The chain is Glucose-6-phosphate isomerase from Salmonella paratyphi B (strain ATCC BAA-1250 / SPB7).